The chain runs to 446 residues: Exodeoxyribonuclease 7 large subunit (446 aa).

It belongs to the XseA family. As to quaternary structure, heterooligomer composed of large and small subunits.

It localises to the cytoplasm. The catalysed reaction is Exonucleolytic cleavage in either 5'- to 3'- or 3'- to 5'-direction to yield nucleoside 5'-phosphates.. Its function is as follows. Bidirectionally degrades single-stranded DNA into large acid-insoluble oligonucleotides, which are then degraded further into small acid-soluble oligonucleotides. The sequence is that of Exodeoxyribonuclease 7 large subunit from Streptococcus pyogenes serotype M6 (strain ATCC BAA-946 / MGAS10394).